Consider the following 33-residue polypeptide: Photosystem II reaction center protein Psb30 (33 aa).

A helical membrane pass occupies residues V5–L25.

Belongs to the Psb30/Ycf12 family. PSII is composed of 1 copy each of membrane proteins PsbA, PsbB, PsbC, PsbD, PsbE, PsbF, PsbH, PsbI, PsbJ, PsbK, PsbL, PsbM, PsbT, PsbX, PsbY, PsbZ, Psb30/Ycf12, peripheral proteins of the oxygen-evolving complex and a large number of cofactors. It forms dimeric complexes.

The protein localises to the plastid. It is found in the chloroplast thylakoid membrane. In terms of biological role, a core subunit of photosystem II (PSII), probably helps stabilize the reaction center. The polypeptide is Photosystem II reaction center protein Psb30 (Chlorokybus atmophyticus (Soil alga)).